The chain runs to 49 residues: MADKSDLGYTGLTDEQAQELHSVYMSGLWLFSAVAIVAHLAVYIWRPWF.

Over 2–27 the chain is Cytoplasmic; it reads ADKSDLGYTGLTDEQAQELHSVYMSG. A bacteriochlorophyll-binding residues include H21 and H39. The helical; Signal-anchor for type II membrane protein transmembrane segment at 28–45 threads the bilayer; it reads LWLFSAVAIVAHLAVYIW. Over 46–49 the chain is Periplasmic; the sequence is RPWF.

It belongs to the antenna complex beta subunit family. In terms of assembly, the core complex is formed by different alpha and beta chains, binding bacteriochlorophyll molecules, and arranged most probably in tetrameric structures disposed around the reaction center. The non-pigmented gamma chains may constitute additional components.

It is found in the cell inner membrane. Functionally, antenna complexes are light-harvesting systems, which transfer the excitation energy to the reaction centers. This chain is Light-harvesting protein B-875 beta chain (pufB), found in Cereibacter sphaeroides (strain ATCC 17023 / DSM 158 / JCM 6121 / CCUG 31486 / LMG 2827 / NBRC 12203 / NCIMB 8253 / ATH 2.4.1.) (Rhodobacter sphaeroides).